Here is a 170-residue protein sequence, read N- to C-terminus: Cyclic pyranopterin monophosphate synthase (170 aa).

Residues 89-91 and 125-126 each bind substrate; these read LCH and ME. Asp140 is a catalytic residue.

The protein belongs to the MoaC family. As to quaternary structure, homohexamer; trimer of dimers.

It catalyses the reaction (8S)-3',8-cyclo-7,8-dihydroguanosine 5'-triphosphate = cyclic pyranopterin phosphate + diphosphate. The protein operates within cofactor biosynthesis; molybdopterin biosynthesis. Functionally, catalyzes the conversion of (8S)-3',8-cyclo-7,8-dihydroguanosine 5'-triphosphate to cyclic pyranopterin monophosphate (cPMP). The protein is Cyclic pyranopterin monophosphate synthase of Streptomyces avermitilis (strain ATCC 31267 / DSM 46492 / JCM 5070 / NBRC 14893 / NCIMB 12804 / NRRL 8165 / MA-4680).